The primary structure comprises 168 residues: uncharacterized protein (168 aa).

This is an uncharacterized protein from Mycoplasma pneumoniae (strain ATCC 29342 / M129 / Subtype 1) (Mycoplasmoides pneumoniae).